Consider the following 2155-residue polypeptide: Alpha-tectorin (2155 aa).

Residues 1-24 (MNYSSLLRIWVSFIFALVRHQAQP) form the signal peptide. N-linked (GlcNAc...) asparagine glycans are attached at residues asparagine 34, asparagine 187, asparagine 215, asparagine 278, asparagine 455, asparagine 506, asparagine 528, and asparagine 560. Residues 98–252 (PFWADVHNGI…GRWAFKVDGK (155 aa)) enclose the NIDO domain. The VWFC domain maps to 260-314 (CTSRGQFLRRGEVFWDDLNCTIKCRCLDFNNEIYCQEASCSPYEVCEPKGRFFYC). Positions 320–500 (STCVVFGEPH…RVYHADWKCG (181 aa)) constitute a VWFD 1 domain. Disulfide bonds link cysteine 322-cysteine 461 and cysteine 344-cysteine 499. Positions 597–650 (CPSFSHYSVCTSSCPDTCSDLTASQNCATPCTEGCECNEGFVLSTSQCVPLHKC) constitute a TIL 1 domain. N-linked (GlcNAc...) asparagine glycosylation is found at asparagine 670, asparagine 687, asparagine 813, asparagine 843, asparagine 855, asparagine 898, asparagine 920, asparagine 931, and asparagine 949. Residues 711-886 (TVCLLSQNQV…SWTTFEEICN (176 aa)) enclose the VWFD 2 domain. Cysteine 713 and cysteine 849 are joined by a disulfide. Residues 984 to 1036 (CPENSHFEECMTCTETCETLALGPICVDSCSEGCQCDEGYALQGSQCVPRSEC) enclose the TIL 2 domain. N-linked (GlcNAc...) asparagine glycans are attached at residues asparagine 1048, asparagine 1064, asparagine 1235, and asparagine 1364. Positions 1098–1278 (ASCIVSGYGH…SWVKRDTFCQ (181 aa)) constitute a VWFD 3 domain. Disulfide bonds link cysteine 1100/cysteine 1241 and cysteine 1122/cysteine 1277. The region spanning 1372–1425 (CPPNSHYESCVSVCQPRCAAIRLKSDCNHYCVEGCQCDAGYVLNGKSCILPHNC) is the TIL 3 domain. Residues 1485–1666 (SYCLAAGGGV…QKRPLAPSCN (182 aa)) enclose the VWFD 4 domain. 7 cysteine pairs are disulfide-bonded: cysteine 1487–cysteine 1622, cysteine 1509–cysteine 1665, cysteine 1717–cysteine 1775, cysteine 1741–cysteine 1784, cysteine 1786–cysteine 1818, cysteine 1806–cysteine 1898, and cysteine 1837–cysteine 1857. N-linked (GlcNAc...) asparagine glycans are attached at residues asparagine 1538, asparagine 1565, asparagine 1756, asparagine 1772, asparagine 1794, asparagine 1851, asparagine 1864, asparagine 1880, asparagine 1920, and asparagine 1939. The ZP domain occupies 1805–2059 (TCKAAQMEVS…YSCKINCPQN (255 aa)). 3 cysteine pairs are disulfide-bonded: cysteine 1980/cysteine 2040, cysteine 2001/cysteine 2056, and cysteine 2045/cysteine 2052. A lipid anchor (GPI-anchor amidated asparagine) is attached at asparagine 2091. The propeptide at 2092 to 2155 (GGCEQICTSR…HLIYKSGATS (64 aa)) is removed in mature form.

In terms of assembly, may form homomeric filament after self-association or heteromeric filament after association with beta-tectorin. Interacts with CEACAM16. Post-translationally, 3 products of tectorin seem to exist: HMM, MMM and LMM. They may be generated by active processing or the result of proteolysis occurring between intrachain disulfide bonds. In terms of processing, the presence of a hydrophobic C-terminus preceded by a potential cleavage site strongly suggests that tectorins are synthesized as glycosylphosphatidylinositol-linked, membrane-bound precursors. Tectorins are targeted to the apical surface of the inner ear epithelia by the lipid and proteolytically released into the extracellular compartment. As to expression, cochlea-specific.

Its subcellular location is the cell membrane. It localises to the secreted. It is found in the extracellular space. The protein localises to the extracellular matrix. Functionally, one of the major non-collagenous components of the tectorial membrane. The tectorial membrane is an extracellular matrix of the inner ear that covers the neuroepithelium of the cochlea and contacts the stereocilia bundles of specialized sensory hair cells. Sound induces movement of these hair cells relative to the tectorial membrane, deflects the stereocilia and leads to fluctuations in hair-cell membrane potential, transducing sound into electrical signals. This Mus musculus (Mouse) protein is Alpha-tectorin (Tecta).